Here is a 96-residue protein sequence, read N- to C-terminus: Putative pterin-4-alpha-carbinolamine dehydratase (96 aa).

Belongs to the pterin-4-alpha-carbinolamine dehydratase family.

It carries out the reaction (4aS,6R)-4a-hydroxy-L-erythro-5,6,7,8-tetrahydrobiopterin = (6R)-L-erythro-6,7-dihydrobiopterin + H2O. The chain is Putative pterin-4-alpha-carbinolamine dehydratase from Prochlorococcus marinus (strain MIT 9215).